A 441-amino-acid polypeptide reads, in one-letter code: Ribosomal protein uS12 methylthiotransferase RimO (441 aa).

Positions 5–116 (PTIAFTHLGC…IVDVMQRVEK (112 aa)) constitute an MTTase N-terminal domain. Residues Cys-14, Cys-50, Cys-79, Cys-154, Cys-158, and Cys-161 each coordinate [4Fe-4S] cluster. Positions 140–370 (TTSEGVAYVR…EVQQSISWQQ (231 aa)) constitute a Radical SAM core domain. Residues 372–438 (QKLVGQLVDV…IYDLYGCLIS (67 aa)) enclose the TRAM domain.

The protein belongs to the methylthiotransferase family. RimO subfamily. Requires [4Fe-4S] cluster as cofactor.

The protein resides in the cytoplasm. It carries out the reaction L-aspartate(89)-[ribosomal protein uS12]-hydrogen + (sulfur carrier)-SH + AH2 + 2 S-adenosyl-L-methionine = 3-methylsulfanyl-L-aspartate(89)-[ribosomal protein uS12]-hydrogen + (sulfur carrier)-H + 5'-deoxyadenosine + L-methionine + A + S-adenosyl-L-homocysteine + 2 H(+). Its function is as follows. Catalyzes the methylthiolation of an aspartic acid residue of ribosomal protein uS12. This Trichodesmium erythraeum (strain IMS101) protein is Ribosomal protein uS12 methylthiotransferase RimO.